Reading from the N-terminus, the 507-residue chain is ATP synthase subunit alpha, chloroplastic (507 aa).

Residue 170-177 participates in ATP binding; that stretch reads GDRQTGKA.

This sequence belongs to the ATPase alpha/beta chains family. As to quaternary structure, F-type ATPases have 2 components, CF(1) - the catalytic core - and CF(0) - the membrane proton channel. CF(1) has five subunits: alpha(3), beta(3), gamma(1), delta(1), epsilon(1). CF(0) has four main subunits: a, b, b' and c.

Its subcellular location is the plastid. The protein localises to the chloroplast thylakoid membrane. The enzyme catalyses ATP + H2O + 4 H(+)(in) = ADP + phosphate + 5 H(+)(out). Functionally, produces ATP from ADP in the presence of a proton gradient across the membrane. The alpha chain is a regulatory subunit. The sequence is that of ATP synthase subunit alpha, chloroplastic from Calycanthus floridus var. glaucus (Eastern sweetshrub).